The sequence spans 115 residues: Replication initiation control protein YabA (115 aa).

Residues histidine 90, cysteine 92, cysteine 106, and cysteine 109 each contribute to the Zn(2+) site.

Belongs to the YabA family. As to quaternary structure, homotetramer. Interacts with both DnaA and DnaN, acting as a bridge between these two proteins. Zn(2+) serves as cofactor.

The protein resides in the cytoplasm. It localises to the nucleoid. Its function is as follows. Involved in control of chromosome replication initiation. Inhibits the cooperative binding of DnaA to the oriC region, thus negatively regulating initiation of chromosome replication. Inhibits the ability of DnaA-ATP to form a helix on DNA; does not disassemble preformed DnaA-DNA helices. Decreases the residence time of DnaA on the chromosome at its binding sites (oriC, replication forks and promoter-binding sites). Tethers DnaA to the replication machinery via the DNA polymerase beta sliding clamp subunit (dnaN). Associates with oriC and other DnaA targets on the chromosome in a DnaA-dependent manner. The sequence is that of Replication initiation control protein YabA from Staphylococcus aureus (strain JH1).